Here is a 498-residue protein sequence, read N- to C-terminus: Glycerol kinase (498 aa).

Thr-12 is an ADP binding site. The ATP site is built by Thr-12, Thr-13, and Ser-14. Thr-12 provides a ligand contact to sn-glycerol 3-phosphate. Position 16 (Arg-16) interacts with ADP. Residues Arg-82, Glu-83, Tyr-134, and Asp-243 each coordinate sn-glycerol 3-phosphate. The glycerol site is built by Arg-82, Glu-83, Tyr-134, Asp-243, and Gln-244. Positions 265 and 308 each coordinate ADP. The ATP site is built by Thr-265, Gly-308, Gln-312, and Gly-409. The ADP site is built by Gly-409 and Asn-413.

It belongs to the FGGY kinase family. In terms of assembly, homotetramer and homodimer (in equilibrium).

The enzyme catalyses glycerol + ATP = sn-glycerol 3-phosphate + ADP + H(+). It functions in the pathway polyol metabolism; glycerol degradation via glycerol kinase pathway; sn-glycerol 3-phosphate from glycerol: step 1/1. With respect to regulation, activated by phosphorylation and inhibited by fructose 1,6-bisphosphate (FBP). Key enzyme in the regulation of glycerol uptake and metabolism. Catalyzes the phosphorylation of glycerol to yield sn-glycerol 3-phosphate. The chain is Glycerol kinase from Clostridium botulinum (strain Okra / Type B1).